The primary structure comprises 170 residues: Adenine phosphoribosyltransferase (170 aa).

It belongs to the purine/pyrimidine phosphoribosyltransferase family. As to quaternary structure, homodimer.

It is found in the cytoplasm. It carries out the reaction AMP + diphosphate = 5-phospho-alpha-D-ribose 1-diphosphate + adenine. It participates in purine metabolism; AMP biosynthesis via salvage pathway; AMP from adenine: step 1/1. In terms of biological role, catalyzes a salvage reaction resulting in the formation of AMP, that is energically less costly than de novo synthesis. The protein is Adenine phosphoribosyltransferase of Thermotoga petrophila (strain ATCC BAA-488 / DSM 13995 / JCM 10881 / RKU-1).